The sequence spans 118 residues: NAD(P)H-quinone oxidoreductase subunit M (118 aa).

It belongs to the complex I NdhM subunit family. NDH-1 can be composed of about 15 different subunits; different subcomplexes with different compositions have been identified which probably have different functions.

The protein resides in the cellular thylakoid membrane. It carries out the reaction a plastoquinone + NADH + (n+1) H(+)(in) = a plastoquinol + NAD(+) + n H(+)(out). The enzyme catalyses a plastoquinone + NADPH + (n+1) H(+)(in) = a plastoquinol + NADP(+) + n H(+)(out). Functionally, NDH-1 shuttles electrons from an unknown electron donor, via FMN and iron-sulfur (Fe-S) centers, to quinones in the respiratory and/or the photosynthetic chain. The immediate electron acceptor for the enzyme in this species is believed to be plastoquinone. Couples the redox reaction to proton translocation, and thus conserves the redox energy in a proton gradient. Cyanobacterial NDH-1 also plays a role in inorganic carbon-concentration. The sequence is that of NAD(P)H-quinone oxidoreductase subunit M from Trichormus variabilis (strain ATCC 29413 / PCC 7937) (Anabaena variabilis).